Reading from the N-terminus, the 122-residue chain is UPF0102 protein DIP1513 (122 aa).

The protein belongs to the UPF0102 family.

This is UPF0102 protein DIP1513 from Corynebacterium diphtheriae (strain ATCC 700971 / NCTC 13129 / Biotype gravis).